A 350-amino-acid chain; its full sequence is Probable aldo-keto reductase 1 (350 aa).

Tyr67 (proton donor) is an active-site residue. A substrate-binding site is contributed by His135. 214 to 224 (SPLGKGFFSSG) is a binding site for NADP(+).

Belongs to the aldo/keto reductase family.

The polypeptide is Probable aldo-keto reductase 1 (Oryza sativa subsp. indica (Rice)).